A 441-amino-acid polypeptide reads, in one-letter code: Ribosomal protein uS12 methylthiotransferase RimO (441 aa).

The MTTase N-terminal domain occupies 8-118 (PKIGFVSLGC…VLEHVHHYTP (111 aa)). Residues Cys17, Cys53, Cys82, Cys150, Cys154, and Cys157 each coordinate [4Fe-4S] cluster. The 238-residue stretch at 136–373 (LTPRHYAYLK…MQLQQQISAE (238 aa)) folds into the Radical SAM core domain. The TRAM domain occupies 376–441 (QEKVGREILV…DEYDLWGTRV (66 aa)).

Belongs to the methylthiotransferase family. RimO subfamily. Requires [4Fe-4S] cluster as cofactor.

Its subcellular location is the cytoplasm. The catalysed reaction is L-aspartate(89)-[ribosomal protein uS12]-hydrogen + (sulfur carrier)-SH + AH2 + 2 S-adenosyl-L-methionine = 3-methylsulfanyl-L-aspartate(89)-[ribosomal protein uS12]-hydrogen + (sulfur carrier)-H + 5'-deoxyadenosine + L-methionine + A + S-adenosyl-L-homocysteine + 2 H(+). Its function is as follows. Catalyzes the methylthiolation of an aspartic acid residue of ribosomal protein uS12. The chain is Ribosomal protein uS12 methylthiotransferase RimO from Klebsiella pneumoniae subsp. pneumoniae (strain ATCC 700721 / MGH 78578).